Reading from the N-terminus, the 129-residue chain is Ubiquinol-cytochrome-c reductase complex assembly factor 2 (129 aa).

Residues 1–13 (MSATRYRRFLKLC) constitute a mitochondrion transit peptide.

The protein resides in the mitochondrion matrix. The protein localises to the mitochondrion nucleoid. It localises to the mitochondrion. Its function is as follows. Required for the assembly of the ubiquinol-cytochrome c reductase complex (mitochondrial respiratory chain complex III or cytochrome b-c1 complex). May play a role in the modulation of respiratory chain activities such as oxygen consumption and ATP production. May be involved in cytochrome b translation and/or stability. This chain is Ubiquinol-cytochrome-c reductase complex assembly factor 2 (uqcc2), found in Danio rerio (Zebrafish).